We begin with the raw amino-acid sequence, 977 residues long: SLIT and NTRK-like protein 3 (977 aa).

The first 26 residues, 1–26, serve as a signal peptide directing secretion; that stretch reads MKPSIAEMLHRGRMLWIILLSTIALG. Over 29 to 654 the chain is Extracellular; sequence TPIPLIEDSE…SPPGGPVPLS (626 aa). A glycan (N-linked (GlcNAc...) asparagine) is linked at N68. 6 LRR repeats span residues 78–99, 102–123, 126–147, 150–171, 174–195, and 197–218; these read RPFKLYLQRNSMRKLYTNSFLH, NAVSINLGNNALQDIQTGAFNG, ILKRLYLHENKLDVFRNDTFLG, SLEYLQADYNVIKRIESGAFRN, KLRVLILNDNLIPMLPTNLFKA, and SLTHLDLRGNRLKVLFYRGMLD. One can recognise an LRRCT 1 domain in the interval 232–283; sequence NPWNCTCEIVQLKSWLERIPYTALVGDITCETPFHFHGKDLREIRKTELCPL. The tract at residues 325–360 is disordered; it reads EYKSSNKQPKPTKQPRTPRPPSTSQALYPGPNQPPI. The LRRNT domain occupies 364 to 406; sequence QTRPPIPIICPTGCTCNLHINDLGLTVNCKERGFNNISELLPR. LRR repeat units lie at residues 409 to 430, 433 to 454, 457 to 478, 481 to 502, 505 to 526, and 528 to 549; these read NAKKLYLSSNLIQKIYRSDFWN, SLDLLHLGNNRISYVQDGAFIN, NLKSLFLNGNDIEKLTPGMFRG, SLHYLYFEFNVIREIQPAAFSL, NLKLLFLNNNLLRTLPTDAFAG, and SLARLNLRKNYFLYLPVAGVLE. One can recognise an LRRCT 2 domain in the interval 562-613; that stretch reads NPWDCTCDLVPFKQWIETISSVSVVGDVLCRSPENLTHRDVRTIELEVLCPE. N-linked (GlcNAc...) asparagine glycosylation is present at N596. A helical membrane pass occupies residues 655–675; it reads VLILSLLVLFFSAVFVAAGLF. The Cytoplasmic segment spans residues 676–977; sequence AYVLRRRRKK…EVLEKTTYRF (302 aa). Disordered stretches follow at residues 708 to 735 and 761 to 790; these read LFEDGGGGGGGSGGGGRPTLSSPEKAPP and EEEVAVSSAQEAGSAERGGPGTQPPGMGEA. Residues 711-724 are compositionally biased toward gly residues; sequence DGGGGGGGSGGGGR. Residues 765–775 show a composition bias toward low complexity; that stretch reads AVSSAQEAGSA.

Belongs to the SLITRK family. Expressed in the occipital lobe of the cerebral cortex of the brain. Expressed at higher levels in some astrocytic brain tumors such as astrocytomas, oligodendrogliomas, glioblastomas, gangliogliomas and primitive neuroectodermal tumors.

It localises to the membrane. In terms of biological role, suppresses neurite outgrowth. The polypeptide is SLIT and NTRK-like protein 3 (SLITRK3) (Homo sapiens (Human)).